Here is a 197-residue protein sequence, read N- to C-terminus: Holliday junction branch migration complex subunit RuvA (197 aa).

The segment at Met1–Leu64 is domain I. Residues Thr65–Gly143 are domain II. Residues Lys144–Leu152 are flexible linker. Positions Leu152–Ile197 are domain III.

Belongs to the RuvA family. As to quaternary structure, homotetramer. Forms an RuvA(8)-RuvB(12)-Holliday junction (HJ) complex. HJ DNA is sandwiched between 2 RuvA tetramers; dsDNA enters through RuvA and exits via RuvB. An RuvB hexamer assembles on each DNA strand where it exits the tetramer. Each RuvB hexamer is contacted by two RuvA subunits (via domain III) on 2 adjacent RuvB subunits; this complex drives branch migration. In the full resolvosome a probable DNA-RuvA(4)-RuvB(12)-RuvC(2) complex forms which resolves the HJ.

The protein resides in the cytoplasm. The RuvA-RuvB-RuvC complex processes Holliday junction (HJ) DNA during genetic recombination and DNA repair, while the RuvA-RuvB complex plays an important role in the rescue of blocked DNA replication forks via replication fork reversal (RFR). RuvA specifically binds to HJ cruciform DNA, conferring on it an open structure. The RuvB hexamer acts as an ATP-dependent pump, pulling dsDNA into and through the RuvAB complex. HJ branch migration allows RuvC to scan DNA until it finds its consensus sequence, where it cleaves and resolves the cruciform DNA. In Caldicellulosiruptor bescii (strain ATCC BAA-1888 / DSM 6725 / KCTC 15123 / Z-1320) (Anaerocellum thermophilum), this protein is Holliday junction branch migration complex subunit RuvA.